Consider the following 311-residue polypeptide: Methionyl-tRNA formyltransferase (311 aa).

112–115 is a (6S)-5,6,7,8-tetrahydrofolate binding site; it reads SLLP.

The protein belongs to the Fmt family.

The catalysed reaction is L-methionyl-tRNA(fMet) + (6R)-10-formyltetrahydrofolate = N-formyl-L-methionyl-tRNA(fMet) + (6S)-5,6,7,8-tetrahydrofolate + H(+). Its function is as follows. Attaches a formyl group to the free amino group of methionyl-tRNA(fMet). The formyl group appears to play a dual role in the initiator identity of N-formylmethionyl-tRNA by promoting its recognition by IF2 and preventing the misappropriation of this tRNA by the elongation apparatus. The protein is Methionyl-tRNA formyltransferase of Sinorhizobium fredii (strain NBRC 101917 / NGR234).